The sequence spans 379 residues: Epoxyqueuosine reductase (379 aa).

D139 serves as the catalytic Proton donor. The 4Fe-4S ferredoxin-type domain maps to 181 to 213; sequence IPLPVDQPVEEGCGKCVACMTICPTGAIVEPYT. Positions 193, 196, 199, 203, 219, 246, 249, and 253 each coordinate [4Fe-4S] cluster.

Belongs to the QueG family. As to quaternary structure, monomer. The cofactor is cob(II)alamin. It depends on [4Fe-4S] cluster as a cofactor.

The protein localises to the cytoplasm. The catalysed reaction is epoxyqueuosine(34) in tRNA + AH2 = queuosine(34) in tRNA + A + H2O. The protein operates within tRNA modification; tRNA-queuosine biosynthesis. Its function is as follows. Catalyzes the conversion of epoxyqueuosine (oQ) to queuosine (Q), which is a hypermodified base found in the wobble positions of tRNA(Asp), tRNA(Asn), tRNA(His) and tRNA(Tyr). The chain is Epoxyqueuosine reductase from Shigella dysenteriae serotype 1 (strain Sd197).